Here is a 365-residue protein sequence, read N- to C-terminus: Probable secreted beta-glucosidase UTH1 (365 aa).

An N-terminal signal peptide occupies residues 1 to 17 (MKLSALLALSASTAVLA).

The protein belongs to the SUN family.

Its subcellular location is the mitochondrion outer membrane. It is found in the secreted. The protein resides in the cell wall. Functionally, involved in aging, oxidative stress response, and in the regulation of mitochondrial biogenesis. Inactivation of UTH1 increases life span, leads to higher resistance to heat stress and against hydrogen peroxide, and increases sensitivity to the superoxide radical-generating drug paraquat and to copper. Also required for the selective autophagic degradation of mitochondria (mitophagy) in response to nitrogen starvation. Involved in the remodeling of the cell wall during the various phases of yeast culture development and under various environmental conditions and plays a role in septation. Involved in cell sensitivity to boric acid. The protein is Probable secreted beta-glucosidase UTH1 (UTH1) of Saccharomyces cerevisiae (strain ATCC 204508 / S288c) (Baker's yeast).